A 202-amino-acid chain; its full sequence is Small ribosomal subunit protein uS4c (202 aa).

Residues 89-152 (MRLDNIIFRL…QSNTFINNCI (64 aa)) enclose the S4 RNA-binding domain.

Belongs to the universal ribosomal protein uS4 family. In terms of assembly, part of the 30S ribosomal subunit. Contacts protein S5. The interaction surface between S4 and S5 is involved in control of translational fidelity.

Its subcellular location is the plastid. In terms of biological role, one of the primary rRNA binding proteins, it binds directly to 16S rRNA where it nucleates assembly of the body of the 30S subunit. Its function is as follows. With S5 and S12 plays an important role in translational accuracy. The sequence is that of Small ribosomal subunit protein uS4c (rps4) from Epifagus virginiana (Beechdrops).